Here is a 49-residue protein sequence, read N- to C-terminus: Large ribosomal subunit protein bL33B (49 aa).

This sequence belongs to the bacterial ribosomal protein bL33 family.

The polypeptide is Large ribosomal subunit protein bL33B (rpmG2) (Lactococcus lactis subsp. cremoris (Streptococcus cremoris)).